A 690-amino-acid polypeptide reads, in one-letter code: Glycine--tRNA ligase beta subunit (690 aa).

The protein belongs to the class-II aminoacyl-tRNA synthetase family. In terms of assembly, tetramer of two alpha and two beta subunits.

It is found in the cytoplasm. It carries out the reaction tRNA(Gly) + glycine + ATP = glycyl-tRNA(Gly) + AMP + diphosphate. The chain is Glycine--tRNA ligase beta subunit from Desulfitobacterium hafniense (strain Y51).